A 136-amino-acid chain; its full sequence is Selenoprotein M (136 aa).

The first 19 residues, 1 to 19, serve as a signal peptide directing secretion; it reads MWLPLPLLLGLLQLQPILS. Active-site nucleophile residues include cysteine 38 and selenocysteine 41. Positions 38-41 form a cross-link, cysteinyl-selenocysteine (Cys-Sec); it reads CGGU. Selenocysteine 41 is a non-standard amino acid (selenocysteine). The tract at residues 111–136 is disordered; the sequence is SSPDAPVPAEFKMAPARASGDTKEDL. The Prevents secretion from ER signature appears at 133–136; it reads KEDL.

It belongs to the selenoprotein M/F family.

It is found in the endoplasmic reticulum. In terms of biological role, may function as a thiol-disulfide oxidoreductase that participates in disulfide bond formation. The protein is Selenoprotein M (selenom) of Xenopus laevis (African clawed frog).